We begin with the raw amino-acid sequence, 100 residues long: Small ribosomal subunit protein uS14 (100 aa).

Belongs to the universal ribosomal protein uS14 family. Part of the 30S ribosomal subunit. Contacts proteins S3 and S10.

Its function is as follows. Binds 16S rRNA, required for the assembly of 30S particles and may also be responsible for determining the conformation of the 16S rRNA at the A site. The chain is Small ribosomal subunit protein uS14 from Synechococcus sp. (strain CC9605).